A 721-amino-acid polypeptide reads, in one-letter code: Exo beta-1,2-glucooligosaccharide sophorohydrolase (non-reducing end) (721 aa).

The N-terminal stretch at 1–18 (MKHIALLTTLLLSASLQA) is a signal peptide. Positions 474–708 (NHKLIGWNET…LLWNLFMSHP (235 aa)) constitute a Glycoamylase-like domain.

In terms of assembly, monomer.

Its subcellular location is the periplasm. The enzyme catalyses [(1-&gt;2)-beta-D-glucosyl](n) + H2O = [(1-&gt;2)-beta-D-glucosyl](n-2) + sophorose. Its function is as follows. Catalyzes the hydrolysis of linear beta-1,2-glucan and beta-1,2-glucooligosaccharides with degrees of polymerization (DPs) greater than or equal to 4, to produce sophorose. The best substrates are tetra- and pentasaccharides. Acts as an exo-type enzyme that releases sophorose from the non-reducing end of the substrate. It cannot hydrolyze cyclic beta-1,2-glucans. The sequence is that of Exo beta-1,2-glucooligosaccharide sophorohydrolase (non-reducing end) from Parabacteroides distasonis (strain ATCC 8503 / DSM 20701 / CIP 104284 / JCM 5825 / NCTC 11152).